The sequence spans 314 residues: Zinc transporter ZIP3 (314 aa).

The Extracellular segment spans residues 1 to 3 (MVK). A helical transmembrane segment spans residues 4–24 (LLVAKILCMVGMFFFMLLGSL). At 25–42 (LPVKIIEMDFEKAHRSKK) the chain is on the cytoplasmic side. The chain crosses the membrane as a helical span at residues 43–63 (ILSLCNTFGGGVFLATCFNAL). Residues 64–85 (LPAVREKLKEVLTLAHISTDYP) lie on the Extracellular side of the membrane. A helical transmembrane segment spans residues 86–106 (LAETIMLLGFFMTVFLEQLVL). Topologically, residues 107–169 (TFRKERPAFI…QELSRSSPLR (63 aa)) are cytoplasmic. Ser125 and Ser129 each carry phosphoserine. The helical transmembrane segment at 170 to 190 (LLSLVFALSAHSVFEGLALGL) threads the bilayer. Residues 191–196 (QEEGEK) are Extracellular-facing. A helical membrane pass occupies residues 197–217 (VVSLFVGVAIHETLVAVALGI). The Cytoplasmic portion of the chain corresponds to 218-229 (NMARSAMALRDA). Residues 230-250 (AKLAVTVSAMIPLGISLGLGI) traverse the membrane as a helical segment. Topologically, residues 251-262 (DSAQGMPSSVAS) are extracellular. Residues 263–283 (VLLQGLAGGTFLFVTFFEILA) traverse the membrane as a helical segment. At 284–292 (KELEEKSDR) the chain is on the cytoplasmic side. Residues 293-313 (LLKVLFLVLGYTVLAGMVFIK) traverse the membrane as a helical segment. Residue Trp314 is a topological domain, extracellular.

This sequence belongs to the ZIP transporter (TC 2.A.5) family.

It localises to the cell membrane. Its subcellular location is the apical cell membrane. The enzyme catalyses Zn(2+)(in) = Zn(2+)(out). Functionally, transporter for the divalent cation Zn(2+). Mediates the influx of Zn(2+) into cells from extracellular space. Controls Zn(2+) accumulation into dentate gyrus granule cells in the hippocampus. Mediates Zn(2+) reuptake from the secreted milk within the alveolar lumen. In Bos taurus (Bovine), this protein is Zinc transporter ZIP3 (SLC39A3).